We begin with the raw amino-acid sequence, 1710 residues long: Protein NETWORKED 1B (1710 aa).

The NAB domain occupies 13–92; sequence YSWWWDSHIP…ERYDHTTVEL (80 aa). The interval 113 to 159 is disordered; the sequence is EDSASSSSEPRTEADTEALQKDGTKSKRSFSQMNKLDGTSDSHEADS. Composition is skewed to basic and acidic residues over residues 122-137 and 150-159; these read PRTEADTEALQKDGTK and GTSDSHEADS. Coiled-coil stretches lie at residues 152 to 446, 474 to 546, 579 to 883, 974 to 1021, 1095 to 1259, and 1285 to 1336; these read SDSH…ELGA, QMLR…EIHC, VKKL…IDSL, HQCG…FESL, VSSL…LQEK, and LILE…LSAY. The disordered stretch occupies residues 1409-1448; it reads RLSRQITRSTSQKRRDRRKIENIQPDDQVTGESRQPRLRP. Residues 1559–1665 are a coiled coil; sequence RRLSSLRISL…VLKLEDGTKS (107 aa).

The protein belongs to the NET family. Expressed in root meristems and at very low levels throughout mature vasculature.

Plant-specific actin binding protein. May be part of a membrane-cytoskeletal adapter complex. This is Protein NETWORKED 1B from Arabidopsis thaliana (Mouse-ear cress).